Here is a 353-residue protein sequence, read N- to C-terminus: Histidinol-phosphate aminotransferase (353 aa).

Lys214 is modified (N6-(pyridoxal phosphate)lysine).

The protein belongs to the class-II pyridoxal-phosphate-dependent aminotransferase family. Histidinol-phosphate aminotransferase subfamily. As to quaternary structure, homodimer. Pyridoxal 5'-phosphate serves as cofactor.

The enzyme catalyses L-histidinol phosphate + 2-oxoglutarate = 3-(imidazol-4-yl)-2-oxopropyl phosphate + L-glutamate. It participates in amino-acid biosynthesis; L-histidine biosynthesis; L-histidine from 5-phospho-alpha-D-ribose 1-diphosphate: step 7/9. The sequence is that of Histidinol-phosphate aminotransferase from Gloeobacter violaceus (strain ATCC 29082 / PCC 7421).